We begin with the raw amino-acid sequence, 388 residues long: Flap endonuclease 1 (388 aa).

An N-domain region spans residues 1-105 (MGIKNLTSLI…GELAKRYARR (105 aa)). Asp34 serves as a coordination point for Mg(2+). Position 71 (Arg71) interacts with DNA. Asp87, Glu159, Glu161, Asp180, and Asp182 together coordinate Mg(2+). Residues 123 to 254 (DVQKFQKRTI…KKSFDMITKH (132 aa)) form an I-domain region. Residue Glu159 coordinates DNA. DNA contacts are provided by Gly232 and Asp234. Position 234 (Asp234) interacts with Mg(2+). Residues 338–346 (VQTRIDTFF) are interaction with PCNA. The disordered stretch occupies residues 349–388 (IKRPRDEDAGSAKKKQKTVAKPGAAGSKKKPAAKKAAGKK). The segment covering 375 to 388 (SKKKPAAKKAAGKK) has biased composition (basic residues).

Belongs to the XPG/RAD2 endonuclease family. FEN1 subfamily. Interacts with PCNA. Three molecules of repG bind to one PCNA trimer with each molecule binding to one PCNA monomer. PCNA stimulates the nuclease activity without altering cleavage specificity. Mg(2+) serves as cofactor. Post-translationally, phosphorylated. Phosphorylation upon DNA damage induces relocalization to the nuclear plasma.

The protein localises to the nucleus. It localises to the nucleolus. Its subcellular location is the nucleoplasm. The protein resides in the mitochondrion. Structure-specific nuclease with 5'-flap endonuclease and 5'-3' exonuclease activities involved in DNA replication and repair. During DNA replication, cleaves the 5'-overhanging flap structure that is generated by displacement synthesis when DNA polymerase encounters the 5'-end of a downstream Okazaki fragment. It enters the flap from the 5'-end and then tracks to cleave the flap base, leaving a nick for ligation. Also involved in the long patch base excision repair (LP-BER) pathway, by cleaving within the apurinic/apyrimidinic (AP) site-terminated flap. Acts as a genome stabilization factor that prevents flaps from equilibrating into structures that lead to duplications and deletions. Also possesses 5'-3' exonuclease activity on nicked or gapped double-stranded DNA, and exhibits RNase H activity. Also involved in replication and repair of rDNA and in repairing mitochondrial DNA. This Heterostelium pallidum (strain ATCC 26659 / Pp 5 / PN500) (Cellular slime mold) protein is Flap endonuclease 1.